The following is a 270-amino-acid chain: Putative pyruvate, phosphate dikinase regulatory protein (270 aa).

148–155 (GISRTSKT) lines the ADP pocket.

It belongs to the pyruvate, phosphate/water dikinase regulatory protein family. PDRP subfamily.

The enzyme catalyses N(tele)-phospho-L-histidyl/L-threonyl-[pyruvate, phosphate dikinase] + ADP = N(tele)-phospho-L-histidyl/O-phospho-L-threonyl-[pyruvate, phosphate dikinase] + AMP + H(+). It catalyses the reaction N(tele)-phospho-L-histidyl/O-phospho-L-threonyl-[pyruvate, phosphate dikinase] + phosphate + H(+) = N(tele)-phospho-L-histidyl/L-threonyl-[pyruvate, phosphate dikinase] + diphosphate. In terms of biological role, bifunctional serine/threonine kinase and phosphorylase involved in the regulation of the pyruvate, phosphate dikinase (PPDK) by catalyzing its phosphorylation/dephosphorylation. The sequence is that of Putative pyruvate, phosphate dikinase regulatory protein from Bacillus cereus (strain AH187).